The primary structure comprises 447 residues: Dihydrolipoyllysine-residue acetyltransferase component of pyruvate dehydrogenase complex (447 aa).

Positions 2 to 78 constitute a Lipoyl-binding domain; sequence PINITMPALS…KVNALIAVLA (77 aa). Lys-43 carries the N6-lipoyllysine modification. Residues 91–140 are disordered; sequence GNGAAGAVPAPKPKETAETAPAAAPAPAAAPAPQAAAPASPAPADGEGKR. A compositionally biased stretch (low complexity) spans 108–134; sequence ETAPAAAPAPAAAPAPQAAAPASPAPA. The region spanning 142 to 179 is the Peripheral subunit-binding (PSBD) domain; sequence FSSPLARRLAKEAGIDLSAIAGSGPHGRVVKKDVETAV. The active site involves His-420.

It belongs to the 2-oxoacid dehydrogenase family. Forms a 24-polypeptide structural core with octahedral symmetry. It depends on (R)-lipoate as a cofactor.

It carries out the reaction N(6)-[(R)-dihydrolipoyl]-L-lysyl-[protein] + acetyl-CoA = N(6)-[(R)-S(8)-acetyldihydrolipoyl]-L-lysyl-[protein] + CoA. Its function is as follows. The pyruvate dehydrogenase complex catalyzes the overall conversion of pyruvate to acetyl-CoA and CO(2). It contains multiple copies of three enzymatic components: pyruvate dehydrogenase (E1), dihydrolipoamide acetyltransferase (E2) and lipoamide dehydrogenase (E3). This is Dihydrolipoyllysine-residue acetyltransferase component of pyruvate dehydrogenase complex (pdhC) from Rhizobium meliloti (strain 1021) (Ensifer meliloti).